The chain runs to 490 residues: B3 domain-containing protein LOC_Os12g40080 (490 aa).

Positions 24-117 (GKSFIKVMIT…HFKVWIYDPS (94 aa)) form a DNA-binding region, TF-B3 1. Residues 161–191 (SGHSKETSEINPANSPSWKPTERVPSSEELD) form a disordered region. Over residues 169–178 (EINPANSPSW) the composition is skewed to polar residues. 2 DNA-binding regions (TF-B3) span residues 236–331 (FYIT…FHPL) and 389–487 (VAVM…IRKS).

The protein localises to the nucleus. The chain is B3 domain-containing protein LOC_Os12g40080 from Oryza sativa subsp. japonica (Rice).